A 257-amino-acid chain; its full sequence is MLILVSPAKTLDFDNPPGSENYSMPTLLDQSEQLIEVCRKLTPTDVATLMKVSDKIAGLNVARFSSWQKEFTPTNAKQAVFAFRGDVYTGLDADTLSPQSLDRAQQQLRILSGLYGLLKPLDLMQPYRLEMGTRLANERGTNLYQFWGDIITDELNQTTAEQGSEFIINLASNEYFKAVKPKKLNAGLITPVFKDCKNGQYKVISFFAKKARGMMVRYILDNNVDSLEALTKFDTAGYYYSEKDSTVNEPVFLREEQ.

It belongs to the UPF0246 family.

The polypeptide is UPF0246 protein Spea_1078 (Shewanella pealeana (strain ATCC 700345 / ANG-SQ1)).